A 101-amino-acid chain; its full sequence is UPF0235 protein MmarC7_0309 (101 aa).

Belongs to the UPF0235 family.

This Methanococcus maripaludis (strain C7 / ATCC BAA-1331) protein is UPF0235 protein MmarC7_0309.